Consider the following 337-residue polypeptide: Nucleoid-associated protein PBPRA2585 (337 aa).

The protein belongs to the YejK family.

It localises to the cytoplasm. It is found in the nucleoid. This chain is Nucleoid-associated protein PBPRA2585, found in Photobacterium profundum (strain SS9).